The sequence spans 1318 residues: MDIFSQRDYYPIPSDDVIKYKHMVHKKWNKNEVIQADIPSIIVHLSSPVDSVDYKGFSDFFLFYRNFLTPAELYDYLILRFKWCMREIESYQHQRSGDNQLRIGKVALIRTFVLLRHGILNHFADDFLLNENLRLRLISFFNEDIKSDMKVIVSCLISLKKAWLHAMKLNWDNVLFNEPAFSAYTDWIDYKIKDVSQLDMAQKRNSRFSYHGIQSISNPDMRNRSILSIYKSDNFDHMVQSNSNKISRNRTPSTLLFQKDSSNSEMATVYSNRKGAQKKTIALPNILTSELDRKDVMSNVTRMSHIIQDAKTLRSSDVNKIIPSTPAKKVELILNTIYSPDCLESENIQESLNQDTSSTQKSFPKGIMSLLARWKKNHKIADPKIRKPVGFTNKREAELDNFVKYVISISSLTNKEEDLKRLNENLDSKFDILSARTIDEVEYLFRLESKLLAQLSTMQKTTRTLSNDEFNDVNVPNNIDSKQISAMDNLDLFRTVNGVARSVISLTNSVNKLNNLSDHSVLDRRRVKSSMPNFYNRERSLSGLSNYAGLQFYDASSEMSAEDDKPQKLVFHDGVDELKNHLTQTFTKPGSISNSSPLKKVLPNLFEHPSVDSLASGDACSYVTYDSQLSQMGTVKKSMKDETSRYSNYEGPVLKKKVAYDNLREFTFEDSKEIIKNDTSSLIDILNSPVTPDLSILPQTPTGKGSVQHKKKEKSESIISPASGRISIAKSHHMSLSPNLTKLKEDDEYVKGDNSLGQAEDELIRLEKNLRDSKLENYNTVVAGNLGAGSGSSTPLGDSPTNVFELPSSINMVESDMDTESFESSFEQRQPTNLREQYFKSIGSPETASPRKVNSNNAYSQVSSQMSPSLANKYLFSPDNESLDIASPVKNVEDLKSRFLKGNNQSASSSQIGASINTSVTATPKNNDMFGSDFDKNGLKNIMTASEEKLSKDPVELAMMKLEGTFKKNKSGNNTGYSSDLEKEVDILNIANLPEMNANPSDKRKSLMLDRRRQTMFNIGPSIYPSNTNDEGYDEESITDDKIWSLIAQYHIDDENLLAKNHANHVPFILMYESKDVAQQFTLIEREILSEIDWKDLLDIKLLYKGPNLTSWLQLLIQNQEFTGIDLAVARFNLTVDWAISEIVLTTDLKMRRNTIERFIHVAEHCRKLQNFNTMMQIILALNSVVVQKFTEAWRLIEPGDMLLWEDLRKIPALDWNYHALRTMMKTVDPLKGCIPFIVVYLSDLTINSEKNTWIVEKRVVNYSKFSTCVQIVKNFIQKVQWSSFYDIIPIQELLSKCIYISSLSQDEIEHLTAEFAR.

The N-terminal Ras-GEF domain occupies 29–164; sequence NKNEVIQADI…CLISLKKAWL (136 aa). 2 disordered regions span residues 694–718 and 842–861; these read LSIL…SESI and IGSP…AYSQ. The segment covering 844–861 has biased composition (polar residues); the sequence is SPETASPRKVNSNNAYSQ. The Ras-GEF domain maps to 1073–1314; it reads ESKDVAQQFT…SQDEIEHLTA (242 aa).

It belongs to the LTE1 family.

The protein resides in the cytoplasm. Its subcellular location is the bud. Functionally, GDP-GTP exchange factor component of the mitotic exit network (MEN). Fine-tunes the timing of the mitotic exit and couples this event with cytokinesis. May also be involved in proprotein-processing in the secretory pathway. The sequence is that of Guanine nucleotide exchange factor LTE1 (LTE1) from Candida glabrata (strain ATCC 2001 / BCRC 20586 / JCM 3761 / NBRC 0622 / NRRL Y-65 / CBS 138) (Yeast).